The following is a 541-amino-acid chain: Chaperonin GroEL 2 (541 aa).

ATP-binding positions include Thr-29–Pro-32, Asp-86–Thr-90, Gly-413, Asn-476–Ala-478, and Asp-492.

This sequence belongs to the chaperonin (HSP60) family. In terms of assembly, forms a cylinder of 14 subunits composed of two heptameric rings stacked back-to-back. Interacts with the co-chaperonin GroES.

It localises to the secreted. The protein localises to the capsule. It is found in the cell surface. Its subcellular location is the cell wall. It catalyses the reaction ATP + H2O + a folded polypeptide = ADP + phosphate + an unfolded polypeptide.. Its function is as follows. Together with its co-chaperonin GroES, plays an essential role in assisting protein folding. The GroEL-GroES system forms a nano-cage that allows encapsulation of the non-native substrate proteins and provides a physical environment optimized to promote and accelerate protein folding. This chain is Chaperonin GroEL 2, found in Mycobacterium leprae (strain TN).